A 210-amino-acid polypeptide reads, in one-letter code: Keratin-associated protein 4-9 (210 aa).

28 consecutive repeat copies span residues 24 to 28, 29 to 33, 34 to 38, 39 to 43, 44 to 48, 49 to 53, 54 to 58, 59 to 63, 69 to 73, 74 to 78, 84 to 88, 89 to 93, 94 to 98, 99 to 103, 104 to 108, 109 to 113, 114 to 118, 119 to 123, 124 to 128, 129 to 133, 134 to 138, 139 to 143, 144 to 148, 149 to 153, 159 to 163, 164 to 168, 169 to 173, and 174 to 178. Positions 24–178 are 29 X 5 AA repeats of C-C-[RQVHIEK]-[SPTR]-[VSTQCRNP]; sequence CCRPSCCETT…CCRPCCCVRP (155 aa).

This sequence belongs to the KRTAP type 4 family. In terms of assembly, interacts with hair keratins. Expressed in the hair follicles.

Its function is as follows. In the hair cortex, hair keratin intermediate filaments are embedded in an interfilamentous matrix, consisting of hair keratin-associated proteins (KRTAP), which are essential for the formation of a rigid and resistant hair shaft through their extensive disulfide bond cross-linking with abundant cysteine residues of hair keratins. The matrix proteins include the high-sulfur and high-glycine-tyrosine keratins. This chain is Keratin-associated protein 4-9 (KRTAP4-9), found in Homo sapiens (Human).